The primary structure comprises 321 residues: XylDLEGF operon transcriptional activator 1 (321 aa).

Residues 214-315 (ERVVQFIEEN…GELPSDTLRQ (102 aa)) enclose the HTH araC/xylS-type domain. 2 consecutive DNA-binding regions (H-T-H motif) follow at residues 231–252 (ERLAELAMMSPRSLYNLFEKHA) and 282–305 (ITEIALDYGFLHLGRFAENYRSAF).

The protein resides in the cytoplasm. In terms of biological role, regulatory protein of the TOL plasmid xyl operons. XylS activates the xylXYZLTEGFJQKIH operon required for the degradation of toluene, m-xylene and p-xylene. The polypeptide is XylDLEGF operon transcriptional activator 1 (xylS1) (Pseudomonas putida (Arthrobacter siderocapsulatus)).